A 244-amino-acid chain; its full sequence is Transcription factor A, mitochondrial (244 aa).

A mitochondrion-targeting transit peptide spans methionine 1–phenylalanine 42. Positions proline 49–lysine 117 form a DNA-binding region, HMG box 1. 3 positions are modified to phosphoserine; by PKA: serine 54, serine 55, and serine 60. At lysine 66 the chain carries N6-succinyllysine. Threonine 121 carries the post-translational modification Phosphothreonine. The segment at residues proline 154–glutamate 218 is a DNA-binding region (HMG box 2). Serine 159 bears the Phosphoserine; by PKA mark. Serine 192 carries the post-translational modification Phosphoserine. The segment at methionine 221 to asparagine 244 is disordered.

As to quaternary structure, monomer; binds DNA as a monomer. Homodimer. Component of the mitochondrial transcription initiation complex, composed at least of TFB2M, TFAM and POLRMT. In this complex TFAM recruits POLRMT to the promoter whereas TFB2M induces structural changes in POLRMT to enable promoter opening and trapping of the DNA non-template strand. Upon metabolic stress, forms a complex composed of FOXO3, SIRT3, TFAM and POLRMT. Interacts with TFB1M and TFB2M. Interacts with CLPX; this enhances DNA-binding. In terms of processing, phosphorylation by PKA within the HMG box 1 impairs DNA binding and promotes degradation by the AAA+ Lon protease. The mitochondrial isoform is widely expressed while the nuclear isoform is testis-specific.

The protein resides in the mitochondrion. It localises to the mitochondrion matrix. The protein localises to the mitochondrion nucleoid. It is found in the nucleus. Functionally, binds to the mitochondrial light strand promoter and functions in mitochondrial transcription regulation. Component of the mitochondrial transcription initiation complex, composed at least of TFB2M, TFAM and POLRMT that is required for basal transcription of mitochondrial DNA. In this complex, TFAM recruits POLRMT to a specific promoter whereas TFB2M induces structural changes in POLRMT to enable promoter opening and trapping of the DNA non-template strand. Required for accurate and efficient promoter recognition by the mitochondrial RNA polymerase. Promotes transcription initiation from the HSP1 and the light strand promoter by binding immediately upstream of transcriptional start sites. Is able to unwind DNA. Bends the mitochondrial light strand promoter DNA into a U-turn shape via its HMG boxes. Required for maintenance of normal levels of mitochondrial DNA. May play a role in organizing and compacting mitochondrial DNA. Its function is as follows. May also function as a transcriptional activator or may have a structural role in the compaction of nuclear DNA during spermatogenesis. The sequence is that of Transcription factor A, mitochondrial from Rattus norvegicus (Rat).